Reading from the N-terminus, the 565-residue chain is Mannosyl-oligosaccharide 1,2-alpha-mannosidase (565 aa).

A disulfide bridge connects residues Cys-320 and Cys-363. Glu-378 acts as the Proton donor in catalysis. Thr-501 lines the Ca(2+) pocket. Composition is skewed to basic and acidic residues over residues 526–538 and 550–565; these read NEKA…KVID and KSAD…EIAG. A disordered region spans residues 526–565; the sequence is NEKAQMRESKVIDKSNLPEAQPVDKSADQEAKEIIEEIAG.

The protein belongs to the glycosyl hydrolase 47 family. The cofactor is Ca(2+).

It carries out the reaction N(4)-(alpha-D-Man-(1-&gt;2)-alpha-D-Man-(1-&gt;2)-alpha-D-Man-(1-&gt;3)-[alpha-D-Man-(1-&gt;2)-alpha-D-Man-(1-&gt;3)-[alpha-D-Man-(1-&gt;2)-alpha-D-Man-(1-&gt;6)]-alpha-D-Man-(1-&gt;6)]-beta-D-Man-(1-&gt;4)-beta-D-GlcNAc-(1-&gt;4)-beta-D-GlcNAc)-L-asparaginyl-[protein] (N-glucan mannose isomer 9A1,2,3B1,2,3) + 4 H2O = N(4)-(alpha-D-Man-(1-&gt;3)-[alpha-D-Man-(1-&gt;3)-[alpha-D-Man-(1-&gt;6)]-alpha-D-Man-(1-&gt;6)]-beta-D-Man-(1-&gt;4)-beta-D-GlcNAc-(1-&gt;4)-beta-D-GlcNAc)-L-asparaginyl-[protein] (N-glucan mannose isomer 5A1,2) + 4 beta-D-mannose. The enzyme catalyses N(4)-(alpha-D-Man-(1-&gt;2)-alpha-D-Man-(1-&gt;2)-alpha-D-Man-(1-&gt;3)-[alpha-D-Man-(1-&gt;3)-[alpha-D-Man-(1-&gt;2)-alpha-D-Man-(1-&gt;6)]-alpha-D-Man-(1-&gt;6)]-beta-D-Man-(1-&gt;4)-beta-D-GlcNAc-(1-&gt;4)-beta-D-GlcNAc)-L-asparaginyl-[protein] (N-glucan mannose isomer 8A1,2,3B1,3) + 3 H2O = N(4)-(alpha-D-Man-(1-&gt;3)-[alpha-D-Man-(1-&gt;3)-[alpha-D-Man-(1-&gt;6)]-alpha-D-Man-(1-&gt;6)]-beta-D-Man-(1-&gt;4)-beta-D-GlcNAc-(1-&gt;4)-beta-D-GlcNAc)-L-asparaginyl-[protein] (N-glucan mannose isomer 5A1,2) + 3 beta-D-mannose. Its pathway is protein modification; protein glycosylation. Its function is as follows. Involved in the maturation of Asn-linked oligosaccharides. Trim a single alpha-1,2-linked mannose residue from Man(9)GlcNAc(2) to produce Man(8)GlcNAc(2). The sequence is that of Mannosyl-oligosaccharide 1,2-alpha-mannosidase (MNS1) from Candida albicans (Yeast).